The chain runs to 234 residues: Thiamine import ATP-binding protein ThiQ (234 aa).

An ABC transporter domain is found at 2–230 (LTLQQVHYYY…HSHPELVEFF (229 aa)). An ATP-binding site is contributed by 32–39 (GPSGAGKS).

This sequence belongs to the ABC transporter superfamily. Thiamine importer (TC 3.A.1.19.1) family. As to quaternary structure, the complex is composed of two ATP-binding proteins (ThiQ), two transmembrane proteins (ThiP) and a solute-binding protein (ThiB).

The protein resides in the cell inner membrane. It carries out the reaction thiamine(out) + ATP + H2O = thiamine(in) + ADP + phosphate + H(+). In terms of biological role, part of the ABC transporter complex ThiBPQ involved in thiamine import. Responsible for energy coupling to the transport system. This Vibrio vulnificus (strain CMCP6) protein is Thiamine import ATP-binding protein ThiQ.